The following is a 437-amino-acid chain: tRNA-2-methylthio-N(6)-dimethylallyladenosine synthase (437 aa).

The MTTase N-terminal domain occupies 1 to 115 (MKVYIETMGC…ISQVIHKEKA (115 aa)). [4Fe-4S] cluster contacts are provided by Cys10, Cys46, Cys78, Cys148, Cys152, and Cys155. Positions 134-367 (KKAQIRSLLN…QNRHKEILEE (234 aa)) constitute a Radical SAM core domain. Residues 370–436 (KLEVGKTHVV…KGRLMATTKG (67 aa)) enclose the TRAM domain.

This sequence belongs to the methylthiotransferase family. MiaB subfamily. Monomer. The cofactor is [4Fe-4S] cluster.

The protein resides in the cytoplasm. It catalyses the reaction N(6)-dimethylallyladenosine(37) in tRNA + (sulfur carrier)-SH + AH2 + 2 S-adenosyl-L-methionine = 2-methylsulfanyl-N(6)-dimethylallyladenosine(37) in tRNA + (sulfur carrier)-H + 5'-deoxyadenosine + L-methionine + A + S-adenosyl-L-homocysteine + 2 H(+). Catalyzes the methylthiolation of N6-(dimethylallyl)adenosine (i(6)A), leading to the formation of 2-methylthio-N6-(dimethylallyl)adenosine (ms(2)i(6)A) at position 37 in tRNAs that read codons beginning with uridine. In Helicobacter pylori (strain J99 / ATCC 700824) (Campylobacter pylori J99), this protein is tRNA-2-methylthio-N(6)-dimethylallyladenosine synthase.